A 77-amino-acid polypeptide reads, in one-letter code: Acyl carrier protein (77 aa).

Residues 1-76 (MDREQRIKEI…DVINYLNEKL (76 aa)) enclose the Carrier domain. O-(pantetheine 4'-phosphoryl)serine is present on Ser-36.

The protein belongs to the acyl carrier protein (ACP) family. 4'-phosphopantetheine is transferred from CoA to a specific serine of apo-ACP by AcpS. This modification is essential for activity because fatty acids are bound in thioester linkage to the sulfhydryl of the prosthetic group.

It localises to the cytoplasm. It functions in the pathway lipid metabolism; fatty acid biosynthesis. Functionally, carrier of the growing fatty acid chain in fatty acid biosynthesis. In Hydrogenobaculum sp. (strain Y04AAS1), this protein is Acyl carrier protein.